We begin with the raw amino-acid sequence, 1403 residues long: Sushi, nidogen and EGF-like domain-containing protein 1 (1403 aa).

An N-terminal signal peptide occupies residues Met-1 to Ala-24. An NIDO domain is found at Ala-103–Ala-258. EGF-like domains follow at residues Thr-268–His-309, Asp-311–Glu-347, and Ala-349–Glu-385. Cystine bridges form between Cys-272–Cys-284, Cys-278–Cys-297, Cys-299–Cys-308, Cys-315–Cys-326, Cys-320–Cys-335, Cys-337–Cys-346, Cys-353–Cys-364, Cys-358–Cys-373, Cys-375–Cys-384, Cys-391–Cys-402, Cys-396–Cys-411, Cys-413–Cys-422, Cys-433–Cys-444, Cys-438–Cys-453, Cys-455–Cys-464, Cys-472–Cys-480, Cys-474–Cys-488, and Cys-490–Cys-499. A glycan (N-linked (GlcNAc...) asparagine) is linked at Asn-292. Positions Asp-387–Glu-423 constitute an EGF-like 4; calcium-binding domain. Asn-408 carries an N-linked (GlcNAc...) asparagine glycan. 2 consecutive EGF-like domains span residues Val-429–Arg-465 and Ile-468–Glu-500. Asn-484 is a glycosylation site (N-linked (GlcNAc...) asparagine). An N-linked (GlcNAc...) asparagine glycan is attached at Asn-536. EGF-like domains are found at residues Leu-541–Glu-577, Arg-580–Glu-616, Lys-619–Glu-655, and Ala-657–Gln-693. 26 disulfide bridges follow: Cys-545–Cys-556, Cys-550–Cys-565, Cys-567–Cys-576, Cys-584–Cys-595, Cys-589–Cys-604, Cys-606–Cys-615, Cys-623–Cys-634, Cys-628–Cys-643, Cys-645–Cys-654, Cys-661–Cys-672, Cys-666–Cys-681, Cys-683–Cys-692, Cys-698–Cys-739, Cys-724–Cys-751, Cys-757–Cys-768, Cys-762–Cys-777, Cys-779–Cys-788, Cys-795–Cys-806, Cys-800–Cys-815, Cys-817–Cys-826, Cys-833–Cys-844, Cys-838–Cys-853, Cys-855–Cys-864, Cys-871–Cys-882, Cys-876–Cys-891, and Cys-893–Cys-902. One can recognise a Sushi domain in the interval Val-696–Glu-753. An N-linked (GlcNAc...) asparagine glycan is attached at Asn-712. Residues Glu-753–Glu-789 enclose the EGF-like 11; calcium-binding domain. The EGF-like 12; calcium-binding domain maps to Glu-791 to Glu-827. EGF-like domains follow at residues Glu-829 to Glu-865 and Val-867 to Thr-903. N-linked (GlcNAc...) asparagine glycosylation occurs at Asn-886. Fibronectin type-III domains are found at residues Pro-908–Arg-1006, Pro-1007–Leu-1105, and Pro-1106–Asp-1200. Residues Asn-977, Asn-1015, Asn-1109, Asn-1139, and Asn-1298 are each glycosylated (N-linked (GlcNAc...) asparagine). Positions Leu-1295 to Thr-1314 are disordered. A compositionally biased stretch (polar residues) spans Ser-1305 to Thr-1314. Residues Thr-1306–Glu-1342 form the EGF-like 15 domain. 3 disulfide bridges follow: Cys-1310/Cys-1321, Cys-1315/Cys-1330, and Cys-1332/Cys-1341.

Phosphorylated on serine and threonine residues. In terms of processing, N-glycosylated. In terms of tissue distribution, expressed in liver.

The protein resides in the secreted. The protein localises to the extracellular space. It localises to the extracellular matrix. This Rattus norvegicus (Rat) protein is Sushi, nidogen and EGF-like domain-containing protein 1.